The following is a 281-amino-acid chain: NADPH-dependent 7-cyano-7-deazaguanine reductase (281 aa).

81 to 83 serves as a coordination point for substrate; the sequence is VES. 83–84 serves as a coordination point for NADPH; it reads SK. Residue C188 is the Thioimide intermediate of the active site. D195 (proton donor) is an active-site residue. 227-228 contacts substrate; that stretch reads HE. NADPH is bound at residue 256-257; it reads RG.

Belongs to the GTP cyclohydrolase I family. QueF type 2 subfamily. As to quaternary structure, homodimer.

It is found in the cytoplasm. The enzyme catalyses 7-aminomethyl-7-carbaguanine + 2 NADP(+) = 7-cyano-7-deazaguanine + 2 NADPH + 3 H(+). Its pathway is tRNA modification; tRNA-queuosine biosynthesis. Its function is as follows. Catalyzes the NADPH-dependent reduction of 7-cyano-7-deazaguanine (preQ0) to 7-aminomethyl-7-deazaguanine (preQ1). The chain is NADPH-dependent 7-cyano-7-deazaguanine reductase from Acidovorax ebreus (strain TPSY) (Diaphorobacter sp. (strain TPSY)).